We begin with the raw amino-acid sequence, 434 residues long: 3-phosphoshikimate 1-carboxyvinyltransferase (434 aa).

Residues lysine 22, serine 23, and arginine 27 each contribute to the 3-phosphoshikimate site. A phosphoenolpyruvate-binding site is contributed by lysine 22. Residues glycine 93 and arginine 121 each coordinate phosphoenolpyruvate. 3-phosphoshikimate contacts are provided by serine 168, serine 169, glutamine 170, serine 199, aspartate 320, and lysine 347. Glutamine 170 contacts phosphoenolpyruvate. Aspartate 320 functions as the Proton acceptor in the catalytic mechanism. Phosphoenolpyruvate-binding residues include arginine 351, arginine 394, and lysine 419.

The protein belongs to the EPSP synthase family. In terms of assembly, monomer.

The protein localises to the cytoplasm. It catalyses the reaction 3-phosphoshikimate + phosphoenolpyruvate = 5-O-(1-carboxyvinyl)-3-phosphoshikimate + phosphate. Its pathway is metabolic intermediate biosynthesis; chorismate biosynthesis; chorismate from D-erythrose 4-phosphate and phosphoenolpyruvate: step 6/7. Functionally, catalyzes the transfer of the enolpyruvyl moiety of phosphoenolpyruvate (PEP) to the 5-hydroxyl of shikimate-3-phosphate (S3P) to produce enolpyruvyl shikimate-3-phosphate and inorganic phosphate. The chain is 3-phosphoshikimate 1-carboxyvinyltransferase from Burkholderia multivorans (strain ATCC 17616 / 249).